Consider the following 158-residue polypeptide: Immunoglobulin J chain (158 aa).

Residues 1 to 22 (MKNHLFFWGVLAIFVQAVLVTA) form the signal peptide. 3 disulfides stabilise this stretch: Cys36/Cys122, Cys95/Cys115, and Cys130/Cys155. A glycan (N-linked (GlcNAc...) (complex) asparagine) is linked at Asn72.

In terms of assembly, part of the secretory IgA (sIgA) complex that consists of two, four or five IgA monomers, and two additional non-Ig polypeptides, namely the JCHAIN and the secretory component (the proteolytic product of PIGR). Part of the secretory IgM (sIgM) complex that consist of five IgM monomers, and two additional non-Ig polypeptides, namely the JCHAIN and the secretory component (the proteolytic product of PIGR). JCHAIN-containing IgM interacts (via CH4 domain) with FCRM (via Ig-like domain). N-glycosylated. N-glycans attached to Asn-72 varies from truncated, differentially fucosylated to sialylated (NeuGc) complex types: Man3GlcNAc2; GlcNAc2Man3GlcNAc2(Fuc); Gal1GlcNAc1Man3GlcNAc2; GlcNAc2Man3GlcNAc2; GlcNAc1Man3GlcNAc2; GlcNAc1Man2GlcNAc2 and NeuGc1Gal1GlcNAc2Man3GlcNAc2.

The protein localises to the secreted. Functionally, serves to link two monomer units of either IgM or IgA. In the case of IgM, the J chain-joined dimer is a nucleating unit for the IgM pentamer, and in the case of IgA it induces dimers and/or larger polymers. It also helps to bind these immunoglobulins to secretory component. The protein is Immunoglobulin J chain (JCHAIN) of Equus asinus (Donkey).